The chain runs to 308 residues: F-actin-capping protein subunit alpha (308 aa).

This sequence belongs to the F-actin-capping protein alpha subunit family. In terms of assembly, component of the F-actin capping complex, composed of a heterodimer of an alpha and a beta subunit.

Its function is as follows. F-actin-capping proteins bind in a Ca(2+)-independent manner to the fast growing ends of actin filaments (barbed end) thereby blocking the exchange of subunits at these ends. Unlike other capping proteins (such as gelsolin and severin), these proteins do not sever actin filaments. The sequence is that of F-actin-capping protein subunit alpha from Arabidopsis thaliana (Mouse-ear cress).